A 107-amino-acid chain; its full sequence is Guanine nucleotide-binding protein G(I)/G(S)/G(O) subunit gamma-14 (107 aa).

The G protein gamma domain occupies 69–107 (KMAADLLKFCTEQAKNDPFLVGIPAATNSFKEKKPYAIL).

The protein belongs to the G protein gamma family. As to quaternary structure, g proteins are composed of 3 units; alpha, beta and gamma.

The protein resides in the cell membrane. In terms of biological role, guanine nucleotide-binding proteins (G proteins) are involved as a modulator or transducer in various transmembrane signaling systems. The beta and gamma chains are required for the GTPase activity, for replacement of GDP by GTP, and for G protein-effector interaction. The polypeptide is Guanine nucleotide-binding protein G(I)/G(S)/G(O) subunit gamma-14 (Homo sapiens (Human)).